Consider the following 666-residue polypeptide: Probable potassium transport system protein Kup (666 aa).

Transmembrane regions (helical) follow at residues 16–36 (GFII…LYTM), 58–78 (ISLI…LIAL), 98–118 (ISPW…SDGA), 141–161 (IYQN…VLFG), 165–185 (FGTG…FSFL), 221–241 (IFIL…YSDL), 253–273 (WPFV…WILA), 299–319 (LATL…FTLI), 343–363 (LYIP…VLAF), 373–393 (YGLA…YYLI), 399–419 (PILA…FFLA), and 424–444 (FMHG…VMFI).

It belongs to the HAK/KUP transporter (TC 2.A.72) family.

Its subcellular location is the cell membrane. It catalyses the reaction K(+)(in) + H(+)(in) = K(+)(out) + H(+)(out). Its function is as follows. Transport of potassium into the cell. Likely operates as a K(+):H(+) symporter. The polypeptide is Probable potassium transport system protein Kup (Streptococcus pyogenes serotype M28 (strain MGAS6180)).